Consider the following 85-residue polypeptide: MKLSLLLVISASMLIDGLVNADGYIRGSNGCKISCLWGNEGCNKECKGFGAYYGYCWTWGLACWCEGLPDDKTWKSESNTCGGKK.

The first 21 residues, 1 to 21, serve as a signal peptide directing secretion; it reads MKLSLLLVISASMLIDGLVNA. Residues 22-82 enclose the LCN-type CS-alpha/beta domain; it reads DGYIRGSNGC…TWKSESNTCG (61 aa). Intrachain disulfides connect C31–C81, C35–C56, C42–C63, and C46–C65.

It belongs to the long (4 C-C) scorpion toxin superfamily. Sodium channel inhibitor family. Beta subfamily. Expressed by the venom gland.

Its subcellular location is the secreted. Functionally, binds to sodium channels (Nav) and inhibits them. Recombinant ANEP delays the convulsion seizure of model animals by 18% and shows anti-neuroexcitatory activity. This Olivierus martensii (Manchurian scorpion) protein is Anti-neuroexcitation peptide 3.